The sequence spans 311 residues: Probable manganese-dependent inorganic pyrophosphatase (311 aa).

Residues His9, Asp13, Asp15, Asp77, His99, and Asp151 each contribute to the Mn(2+) site.

Belongs to the PPase class C family. The cofactor is Mn(2+).

Its subcellular location is the cytoplasm. It catalyses the reaction diphosphate + H2O = 2 phosphate + H(+). This Streptococcus sanguinis (strain SK36) protein is Probable manganese-dependent inorganic pyrophosphatase.